Here is a 513-residue protein sequence, read N- to C-terminus: Protein disulfide-isomerase (513 aa).

The first 23 residues, 1–23, serve as a signal peptide directing secretion; the sequence is MAIRSKAWISLLLALAVALSARA. One can recognise a Thioredoxin 1 domain in the interval 24-145; sequence EEEPAAAAEG…IVDYLKKQVG (122 aa). Catalysis depends on nucleophile residues Cys-63 and Cys-66. Residues Cys-63 and Cys-66 are joined by a disulfide bond. Asn-279 is a glycosylation site (N-linked (GlcNAc...) asparagine). The 120-residue stretch at 366–485 folds into the Thioredoxin 2 domain; the sequence is FRNSEPIPEV…IVDFIKKSKE (120 aa). Residues Cys-408 and Cys-411 each act as nucleophile in the active site. Cys-408 and Cys-411 form a disulfide bridge. A disordered region spans residues 485 to 513; sequence ETAAPHHHHHPGATGIREGSRAEPVKDEL. Basic and acidic residues predominate over residues 502-513; it reads EGSRAEPVKDEL. The Prevents secretion from ER motif lies at 510 to 513; that stretch reads KDEL.

It belongs to the protein disulfide isomerase family.

It is found in the endoplasmic reticulum lumen. It carries out the reaction Catalyzes the rearrangement of -S-S- bonds in proteins.. In terms of biological role, participates in the folding of proteins containing disulfide bonds, may be involved in glycosylation, prolyl hydroxylation and triglyceride transfer. The protein is Protein disulfide-isomerase (PDI) of Zea mays (Maize).